Consider the following 426-residue polypeptide: Protein arginine N-methyltransferase 2 (426 aa).

Disordered stretches follow at residues 65 to 88 (DEEE…GQES) and 155 to 175 (DEEM…AVAA). A compositionally biased stretch (polar residues) spans 73–88 (NGVQTNGDRQTHGQES). Acidic residues predominate over residues 155–168 (DEEMEEDGEQEQEQ). The 220-residue stretch at 207–426 (PSVTSSRYLN…YRLPLCKYMD (220 aa)) folds into the RMT2 domain. S-adenosyl-L-methionine is bound by residues Y214, M243, 263 to 268 (HGMGIV), 284 to 286 (EAH), 311 to 312 (WQ), and D331.

It belongs to the class I-like SAM-binding methyltransferase superfamily. RMT2 methyltransferase family. In terms of assembly, monomer.

It localises to the cytoplasm. Its subcellular location is the nucleus. In terms of biological role, S-adenosyl-L-methionine-dependent protein-arginine N-methyltransferase that methylates the delta-nitrogen atom of arginine residues to form N5-methylarginine (type IV) in target proteins. Monomethylates ribosomal protein L12. In Emericella nidulans (strain FGSC A4 / ATCC 38163 / CBS 112.46 / NRRL 194 / M139) (Aspergillus nidulans), this protein is Protein arginine N-methyltransferase 2.